The chain runs to 139 residues: MHEWALADAIVRTVLDYAQKEGASRVKAVKVVLGELQDVGEDIVKFAMEELFRGTIAEGAEIIFEEEEAVFKCRNCGHVWKLKEVKDKLDERIREDIHFIPEVVHAFLSCPKCGSHDFEVVKGRGVYISGIMIEKEGEE.

Histidine 2 is a Ni(2+) binding site. Positions 73, 76, 110, and 113 each coordinate Zn(2+).

This sequence belongs to the HypA/HybF family.

Involved in the maturation of [NiFe] hydrogenases. Required for nickel insertion into the metal center of the hydrogenase. The sequence is that of Hydrogenase maturation factor HypA from Pyrococcus furiosus (strain ATCC 43587 / DSM 3638 / JCM 8422 / Vc1).